Reading from the N-terminus, the 78-residue chain is Cytochrome b-c1 complex subunit 10, mitochondrial (78 aa).

The Mitochondrial matrix segment spans residues 1–26; the sequence is MVSYVKGPAYKALSHFGKLNAPLVRS. Residues 27–46 traverse the membrane as a helical segment; the sequence is YIPNLVFWGAAAGGAVATFT. At 47–78 the chain is on the mitochondrial intermembrane side; that stretch reads EGVPLFQKTFYEKIPFFGQHWIYNPDPEDVPV.

The protein belongs to the UQCR11/QCR10 family. In terms of assembly, component of the ubiquinol-cytochrome c oxidoreductase (cytochrome b-c1 complex, complex III, CIII), a multisubunit enzyme composed of 10 subunits. The complex is composed of 3 respiratory subunits cytochrome b (COB), cytochrome c1 (CYT1) and Rieske protein (RIP1), 2 core protein subunits COR1 and QCR2, and 5 low-molecular weight protein subunits QCR6, QCR7, QCR8, QCR9 and QCR10. The complex exists as an obligatory dimer and forms supercomplexes (SCs) in the inner mitochondrial membrane with a monomer or a dimer of cytochrome c oxidase (complex IV, CIV), resulting in 2 different assemblies (supercomplexes III(2)IV and III(2)IV(2)).

It is found in the mitochondrion inner membrane. In terms of biological role, component of the ubiquinol-cytochrome c oxidoreductase, a multisubunit transmembrane complex that is part of the mitochondrial electron transport chain which drives oxidative phosphorylation. The complex plays an important role in the uptake of multiple carbon sources present in different host niches. This Candida albicans (strain SC5314 / ATCC MYA-2876) (Yeast) protein is Cytochrome b-c1 complex subunit 10, mitochondrial.